Reading from the N-terminus, the 88-residue chain is Small ribosomal subunit protein bS20 (88 aa).

Belongs to the bacterial ribosomal protein bS20 family.

Binds directly to 16S ribosomal RNA. This chain is Small ribosomal subunit protein bS20, found in Brucella abortus (strain S19).